The primary structure comprises 118 residues: Succinate dehydrogenase assembly factor 1, mitochondrial (118 aa).

An LYR motif 1; required for interaction with HSC20 motif is present at residues 14 to 16 (LYR). Positions 53–55 (LYR) match the LYR motif 2; not required for interaction with HSC20 motif. The tract at residues 53 to 65 (LYRRGRRQLQLLR) is interaction with SDHB. The disordered stretch occupies residues 68 to 118 (HATAMGTFVRPRGPAEEPGDATAPGTRLDDGGAPKNSCEDTGARETRSDGR). Positions 94-118 (RLDDGGAPKNSCEDTGARETRSDGR) are enriched in basic and acidic residues.

It belongs to the complex I LYR family. SDHAF1 subfamily. As to quaternary structure, interacts with SDHB within an SDHA-SDHB subcomplex. Also interacts with the iron-sulfur transfer complex formed by HSC20, HSPA9 and ISCU through direct binding to HSC20. Binding of SDHAF1 to SDHB precedes and is necessary for recruitment of the iron-sulfur transfer complex by SDHAF1.

It is found in the mitochondrion matrix. Its function is as follows. Plays an essential role in the assembly of succinate dehydrogenase (SDH), an enzyme complex (also referred to as respiratory complex II) that is a component of both the tricarboxylic acid (TCA) cycle and the mitochondrial electron transport chain, and which couples the oxidation of succinate to fumarate with the reduction of ubiquinone (coenzyme Q) to ubiquinol. Promotes maturation of the iron-sulfur protein subunit Sdhb of the SDH catalytic dimer, protecting it from the deleterious effects of oxidants. May act together with SDHAF3. Contributes to iron-sulfur cluster incorporation into SDHB by binding to SDHB and recruiting the iron-sulfur transfer complex formed by HSC20, HSPA9 and ISCU through direct binding to HSC20. The chain is Succinate dehydrogenase assembly factor 1, mitochondrial from Mus musculus (Mouse).